The primary structure comprises 212 residues: MKLDVIKLDGGKAGSVDLDDAIFGIDEIRGDILQRVVTWQLAKRRSGNHKIQVRNEVSRTSKKMYKQKGTGGARHGSRRAAQFVGGAKAHGPVVRSHAFDLPKKIRALALRHALSSKAKAGSLVVVDSVALTEAKTAALRATFDKIGLKNALVIAGPEVDANFKLAARNIPNVDVLPNAGLNVYDVLRRQTLVLTKDAVEAISARFAEKEAA.

The protein belongs to the universal ribosomal protein uL4 family. As to quaternary structure, part of the 50S ribosomal subunit.

In terms of biological role, one of the primary rRNA binding proteins, this protein initially binds near the 5'-end of the 23S rRNA. It is important during the early stages of 50S assembly. It makes multiple contacts with different domains of the 23S rRNA in the assembled 50S subunit and ribosome. Functionally, forms part of the polypeptide exit tunnel. The polypeptide is Large ribosomal subunit protein uL4 (Caulobacter vibrioides (strain ATCC 19089 / CIP 103742 / CB 15) (Caulobacter crescentus)).